The sequence spans 378 residues: Protein RecA (378 aa).

Residue 66-73 participates in ATP binding; it reads GPESSGKT. Residues 333–378 form a disordered region; sequence PDAAKAEAATDAAAAADTAGTDDAAKSVPAPASKTAKATKATAVKS. Low complexity predominate over residues 338–378; it reads AEAATDAAAAADTAGTDDAAKSVPAPASKTAKATKATAVKS.

It belongs to the RecA family.

The protein resides in the cytoplasm. Can catalyze the hydrolysis of ATP in the presence of single-stranded DNA, the ATP-dependent uptake of single-stranded DNA by duplex DNA, and the ATP-dependent hybridization of homologous single-stranded DNAs. It interacts with LexA causing its activation and leading to its autocatalytic cleavage. In Streptomyces venezuelae (strain ATCC 10712 / CBS 650.69 / DSM 40230 / JCM 4526 / NBRC 13096 / PD 04745), this protein is Protein RecA.